The chain runs to 79 residues: Putative defensin-like protein 309 (79 aa).

Positions 1–19 (MKILAFFIFVLLIFSCSSS) are cleaved as a signal peptide. Intrachain disulfides connect Cys-31–Cys-50, Cys-37–Cys-55, and Cys-41–Cys-57.

It belongs to the DEFL family.

Its subcellular location is the secreted. The sequence is that of Putative defensin-like protein 309 from Arabidopsis thaliana (Mouse-ear cress).